The following is a 401-amino-acid chain: Ribosomal RNA large subunit methyltransferase G (401 aa).

Belongs to the methyltransferase superfamily. RlmG family.

Its subcellular location is the cytoplasm. It catalyses the reaction guanosine(1835) in 23S rRNA + S-adenosyl-L-methionine = N(2)-methylguanosine(1835) in 23S rRNA + S-adenosyl-L-homocysteine + H(+). Specifically methylates the guanine in position 1835 (m2G1835) of 23S rRNA. The sequence is that of Ribosomal RNA large subunit methyltransferase G from Shewanella loihica (strain ATCC BAA-1088 / PV-4).